The following is a 69-amino-acid chain: DNA-directed RNA polymerase subunit epsilon (69 aa).

It belongs to the RNA polymerase subunit epsilon family. As to quaternary structure, RNAP is composed of a core of 2 alpha, a beta and a beta' subunit. The core is associated with a delta subunit, and at least one of epsilon or omega. When a sigma factor is associated with the core the holoenzyme is formed, which can initiate transcription.

The enzyme catalyses RNA(n) + a ribonucleoside 5'-triphosphate = RNA(n+1) + diphosphate. In terms of biological role, a non-essential component of RNA polymerase (RNAP). This Lysinibacillus sphaericus (strain C3-41) protein is DNA-directed RNA polymerase subunit epsilon.